The following is a 136-amino-acid chain: Large ribosomal subunit protein eL27 (136 aa).

The 36-residue stretch at 5–40 (MKPGKVVMVLAGRYAGRKAVIVKNIDDGTADRPYSH) folds into the KOW domain.

The protein belongs to the eukaryotic ribosomal protein eL27 family. As to quaternary structure, component of the large ribosomal subunit.

The protein localises to the cytoplasm. It is found in the cytosol. The protein resides in the rough endoplasmic reticulum. Its function is as follows. Component of the large ribosomal subunit. This chain is Large ribosomal subunit protein eL27 (rpl27), found in Ictalurus punctatus (Channel catfish).